The chain runs to 276 residues: Putative E3 ubiquitin-protein ligase SINA-like 9 (276 aa).

The segment at 38 to 74 (CPICCEALTSPIFQCDNGHLACGSCCPKLSNKCPACT) adopts an RING-type zinc-finger fold. The SBD stretch occupies residues 88–274 (VLESILIPCP…MQVFIIENVD (187 aa)). Residues 91–149 (SILIPCPNVRFGCTKSFFYGKESAHEKECIFSQCSCPSSVCDYTGSYKDLYAHYKLTHS) form an SIAH-type zinc finger. Cys96, Cys103, His115, Cys119, Cys126, Cys131, His143, and His148 together coordinate Zn(2+).

Belongs to the SINA (Seven in absentia) family.

It carries out the reaction S-ubiquitinyl-[E2 ubiquitin-conjugating enzyme]-L-cysteine + [acceptor protein]-L-lysine = [E2 ubiquitin-conjugating enzyme]-L-cysteine + N(6)-ubiquitinyl-[acceptor protein]-L-lysine.. It functions in the pathway protein modification; protein ubiquitination. In terms of biological role, E3 ubiquitin-protein ligase that mediates ubiquitination and subsequent proteasomal degradation of target proteins. E3 ubiquitin ligases accept ubiquitin from an E2 ubiquitin-conjugating enzyme in the form of a thioester and then directly transfers the ubiquitin to targeted substrates. It probably triggers the ubiquitin-mediated degradation of different substrates. In Arabidopsis thaliana (Mouse-ear cress), this protein is Putative E3 ubiquitin-protein ligase SINA-like 9.